A 448-amino-acid chain; its full sequence is Putative flavin-containing monooxygenase FMO GS-OX-like 10 (448 aa).

18 to 23 contacts FAD; it reads GAGAAG. 212–217 is an NADP(+) binding site; sequence GSSVSG.

It belongs to the FMO family. It depends on FAD as a cofactor.

Catalyzes the conversion of methylthioalkyl glucosinolates of any chain length into methylsulfinylalkyl glucosinolates. The sequence is that of Putative flavin-containing monooxygenase FMO GS-OX-like 10 from Arabidopsis thaliana (Mouse-ear cress).